Here is a 432-residue protein sequence, read N- to C-terminus: Adenylosuccinate synthetase (432 aa).

GTP contacts are provided by residues 13 to 19 and 41 to 43; these read GDEGKGK and GHT. D14 functions as the Proton acceptor in the catalytic mechanism. D14 and G41 together coordinate Mg(2+). IMP is bound by residues 14 to 17, 39 to 42, T130, R144, Q225, T240, and R304; these read DEGK and NAGH. H42 (proton donor) is an active-site residue. 300–306 is a binding site for substrate; that stretch reads ATTGRKR. Residues R306, 332-334, and 415-417 each bind GTP; these read KLD and STG.

It belongs to the adenylosuccinate synthetase family. Homodimer. Mg(2+) is required as a cofactor.

It is found in the cytoplasm. The enzyme catalyses IMP + L-aspartate + GTP = N(6)-(1,2-dicarboxyethyl)-AMP + GDP + phosphate + 2 H(+). Its pathway is purine metabolism; AMP biosynthesis via de novo pathway; AMP from IMP: step 1/2. Functionally, plays an important role in the de novo pathway of purine nucleotide biosynthesis. Catalyzes the first committed step in the biosynthesis of AMP from IMP. In Vibrio cholerae serotype O1 (strain ATCC 39541 / Classical Ogawa 395 / O395), this protein is Adenylosuccinate synthetase.